The chain runs to 383 residues: 8-amino-7-oxononanoate synthase (383 aa).

Residue Arg23 participates in substrate binding. Pyridoxal 5'-phosphate is bound at residue 110–111; that stretch reads GF. Substrate is bound at residue His135. Positions 181, 209, and 235 each coordinate pyridoxal 5'-phosphate. Position 238 is an N6-(pyridoxal phosphate)lysine (Lys238). Substrate is bound at residue Thr351.

It belongs to the class-II pyridoxal-phosphate-dependent aminotransferase family. BioF subfamily. In terms of assembly, homodimer. Pyridoxal 5'-phosphate is required as a cofactor.

The enzyme catalyses 6-carboxyhexanoyl-[ACP] + L-alanine + H(+) = (8S)-8-amino-7-oxononanoate + holo-[ACP] + CO2. Its pathway is cofactor biosynthesis; biotin biosynthesis. Catalyzes the decarboxylative condensation of pimeloyl-[acyl-carrier protein] and L-alanine to produce 8-amino-7-oxononanoate (AON), [acyl-carrier protein], and carbon dioxide. This chain is 8-amino-7-oxononanoate synthase, found in Aliivibrio salmonicida (strain LFI1238) (Vibrio salmonicida (strain LFI1238)).